Consider the following 1072-residue polypeptide: DNA-directed RNA polymerase subunit beta (1072 aa).

Belongs to the RNA polymerase beta chain family. In plastids the minimal PEP RNA polymerase catalytic core is composed of four subunits: alpha, beta, beta', and beta''. When a (nuclear-encoded) sigma factor is associated with the core the holoenzyme is formed, which can initiate transcription.

The protein localises to the plastid. It is found in the chloroplast. It catalyses the reaction RNA(n) + a ribonucleoside 5'-triphosphate = RNA(n+1) + diphosphate. Functionally, DNA-dependent RNA polymerase catalyzes the transcription of DNA into RNA using the four ribonucleoside triphosphates as substrates. The protein is DNA-directed RNA polymerase subunit beta of Draba nemorosa (Woodland whitlowgrass).